A 465-amino-acid polypeptide reads, in one-letter code: UDP-N-acetylmuramate--L-alanine ligase (465 aa).

Residue 112 to 118 (GTHGKTT) coordinates ATP.

It belongs to the MurCDEF family.

Its subcellular location is the cytoplasm. It catalyses the reaction UDP-N-acetyl-alpha-D-muramate + L-alanine + ATP = UDP-N-acetyl-alpha-D-muramoyl-L-alanine + ADP + phosphate + H(+). It functions in the pathway cell wall biogenesis; peptidoglycan biosynthesis. Its function is as follows. Cell wall formation. This chain is UDP-N-acetylmuramate--L-alanine ligase, found in Burkholderia vietnamiensis (strain G4 / LMG 22486) (Burkholderia cepacia (strain R1808)).